A 207-amino-acid chain; its full sequence is Vexin (207 aa).

The segment at 65 to 104 (RDTGDRRWLQTGRLQTARPPGAHPTKTPSRPVGISEPKTS) is disordered.

Belongs to the vexin family.

The protein localises to the cell membrane. Its subcellular location is the nucleus. In terms of biological role, required for neurogenesis in the neural plate and retina. Strongly cooperates with neural bHLH factors to promote neurogenesis. The sequence is that of Vexin from Mus musculus (Mouse).